A 306-amino-acid polypeptide reads, in one-letter code: MSSEKSGLPDSVPHTSPPPYNAPQPPAEPPAPPPQAAPSSHHHHHHHYHQSGTATLPRLGAGGLASSAATAQRGPSSSATLPRPPHHAPPGPAAGAPPPGCATLPRMPPDPYLQETRFEGPLPPPPPAAAAPPPPAPAQTAQAPGFVVPTHAGTVGTLPLGGYVAPGYPLQLQPCTAYVPVYPVGTPYAGGTPGGTGVTSTLPPPPQGPGLALLEPRRPPHDYMPIAVLTTICCFWPTGIIAIFKAVQVRTALARGDMVSAEIASREARNFSFISLAVGIAAMVLCTILTVVIIIAAQHHENYWDP.

The interval 1-142 is disordered; it reads MSSEKSGLPD…PPPAPAQTAQ (142 aa). Over 1 to 223 the chain is Cytoplasmic; sequence MSSEKSGLPD…LEPRRPPHDY (223 aa). A compositionally biased stretch (pro residues) spans 15-36; that stretch reads TSPPPYNAPQPPAEPPAPPPQA. Basic residues predominate over residues 40–49; it reads SHHHHHHHYH. Pro residues-rich tracts occupy residues 87 to 111 and 121 to 137; these read HAPP…PPDP and PLPP…PPAP. A helical membrane pass occupies residues 224-244; it reads MPIAVLTTICCFWPTGIIAIF. At 245–275 the chain is on the extracellular side; that stretch reads KAVQVRTALARGDMVSAEIASREARNFSFIS. Positions 276–296 form an intramembrane region, helical; sequence LAVGIAAMVLCTILTVVIIIA. The Extracellular portion of the chain corresponds to 297–306; that stretch reads AQHHENYWDP.

Belongs to the CD225/Dispanin family. As to quaternary structure, component of the outer core of AMPAR complex. AMPAR complex consists of an inner core made of 4 pore-forming GluA/GRIA proteins (GRIA1, GRIA2, GRIA3 and GRIA4) and 4 major auxiliary subunits arranged in a twofold symmetry. One of the two pairs of distinct binding sites is occupied either by CNIH2, CNIH3 or CACNG2, CACNG3. The other harbors CACNG2, CACNG3, CACNG4, CACNG8 or GSG1L. This inner core of AMPAR complex is complemented by outer core constituents binding directly to the GluA/GRIA proteins at sites distinct from the interaction sites of the inner core constituents. Outer core constituents include at least PRRT1, PRRT2, CKAMP44/SHISA9, FRRS1L and NRN1. The proteins of the inner and outer core serve as a platform for other, more peripherally associated AMPAR constituents. Alone or in combination, these auxiliary subunits control the gating and pharmacology of the AMPAR complex and profoundly impact their biogenesis and protein processing.

It localises to the cell membrane. The protein resides in the synapse. Required to maintain a pool of extrasynaptic AMPA-regulated glutamate receptors (AMPAR) which is necessary for synapse development and function. Regulates basal AMPAR function and synaptic transmission during development but is dispensable at mature hippocampal synapses. Plays a role in regulating basal phosphorylation levels of glutamate receptor GRIA1 and promotes GRIA1 and GRIA2 cell surface expression. The chain is Proline-rich transmembrane protein 1 from Homo sapiens (Human).